Reading from the N-terminus, the 371-residue chain is Protein disulfide isomerase-like 2-2 (371 aa).

The first 27 residues, Met1 to Ala27, serve as a signal peptide directing secretion. Thioredoxin domains lie at Ala28 to Gly143 and Lys147 to Gly262. Catalysis depends on nucleophile residues Cys64, Cys67, Cys183, and Cys186. Cystine bridges form between Cys64–Cys67 and Cys183–Cys186.

It belongs to the protein disulfide isomerase family.

The protein resides in the secreted. The catalysed reaction is Catalyzes the rearrangement of -S-S- bonds in proteins.. Its function is as follows. Acts as a protein-folding catalyst that interacts with nascent polypeptides to catalyze the formation, isomerization, and reduction or oxidation of disulfide bonds. May play a role in storage protein biogenesis. This is Protein disulfide isomerase-like 2-2 (PDIL2-2) from Oryza sativa subsp. japonica (Rice).